The sequence spans 350 residues: 3-isopropylmalate dehydrogenase (350 aa).

76 to 87 is an NAD(+) binding site; that stretch reads GPKWDNAPKRPE. Arginine 94, arginine 104, arginine 132, and aspartate 217 together coordinate substrate. Aspartate 217, aspartate 241, and aspartate 245 together coordinate Mg(2+). 275–287 contributes to the NAD(+) binding site; sequence GSAPDIANQNIAN.

The protein belongs to the isocitrate and isopropylmalate dehydrogenases family. LeuB type 1 subfamily. Homodimer. It depends on Mg(2+) as a cofactor. Mn(2+) serves as cofactor.

The protein localises to the cytoplasm. It catalyses the reaction (2R,3S)-3-isopropylmalate + NAD(+) = 4-methyl-2-oxopentanoate + CO2 + NADH. Its pathway is amino-acid biosynthesis; L-leucine biosynthesis; L-leucine from 3-methyl-2-oxobutanoate: step 3/4. Its function is as follows. Catalyzes the oxidation of 3-carboxy-2-hydroxy-4-methylpentanoate (3-isopropylmalate) to 3-carboxy-4-methyl-2-oxopentanoate. The product decarboxylates to 4-methyl-2 oxopentanoate. The sequence is that of 3-isopropylmalate dehydrogenase from Listeria monocytogenes serotype 4b (strain F2365).